The primary structure comprises 361 residues: Chorismate synthase (361 aa).

NADP(+)-binding residues include R48 and R54. Residues 125 to 127 (RSS), 238 to 239 (NA), G278, 293 to 297 (KPTSS), and R319 contribute to the FMN site.

Belongs to the chorismate synthase family. In terms of assembly, homotetramer. FMNH2 is required as a cofactor.

The enzyme catalyses 5-O-(1-carboxyvinyl)-3-phosphoshikimate = chorismate + phosphate. The protein operates within metabolic intermediate biosynthesis; chorismate biosynthesis; chorismate from D-erythrose 4-phosphate and phosphoenolpyruvate: step 7/7. In terms of biological role, catalyzes the anti-1,4-elimination of the C-3 phosphate and the C-6 proR hydrogen from 5-enolpyruvylshikimate-3-phosphate (EPSP) to yield chorismate, which is the branch point compound that serves as the starting substrate for the three terminal pathways of aromatic amino acid biosynthesis. This reaction introduces a second double bond into the aromatic ring system. The protein is Chorismate synthase of Salmonella choleraesuis (strain SC-B67).